The chain runs to 205 residues: Transcription antitermination protein NusB (205 aa).

The protein belongs to the NusB family.

Involved in transcription antitermination. Required for transcription of ribosomal RNA (rRNA) genes. Binds specifically to the boxA antiterminator sequence of the ribosomal RNA (rrn) operons. This Acaryochloris marina (strain MBIC 11017) protein is Transcription antitermination protein NusB.